A 335-amino-acid polypeptide reads, in one-letter code: Probable G-protein coupled receptor 174 (335 aa).

The Extracellular portion of the chain corresponds to 1-27; that stretch reads MTDNFTCNKTDGDNTDFRYFIYAVTYT. Residues N4 and N8 are each glycosylated (N-linked (GlcNAc...) asparagine). Residues 28–48 form a helical membrane-spanning segment; that stretch reads VILVPGLIGNILALWVFYGYM. The Cytoplasmic segment spans residues 49 to 53; sequence KETKR. A helical membrane pass occupies residues 54–74; that stretch reads AVVFMINLAIADLLQILSLPL. Residues 75–91 are Extracellular-facing; sequence RIFYYLNHDWPFGPGLC. C91 and C168 are joined by a disulfide. The helical transmembrane segment at 92 to 112 threads the bilayer; sequence MFCFYLKYVNMYASIYFLVCI. The Cytoplasmic segment spans residues 113-134; it reads SVRRFWFLMYPFRFNDCKQKYD. The helical transmembrane segment at 135–155 threads the bilayer; sequence LYISIIGWLIICLACLLFPLL. Residues 156 to 182 lie on the Extracellular side of the membrane; it reads RTNDDTPGNRTKCFVDLPIRNVNLAQS. N-linked (GlcNAc...) asparagine glycosylation is present at N164. The chain crosses the membrane as a helical span at residues 183–203; sequence VAMITIGEVVGFVTPLMIVLY. Topologically, residues 204–231 are cytoplasmic; sequence CTWKTALSLQNKYPISQHLGEKKKALKM. The chain crosses the membrane as a helical span at residues 232 to 252; that stretch reads ILTCAGVFLVCFVPYHFSFPL. Residues 253–268 are Extracellular-facing; the sequence is DFLVKSNEIKSCFARR. Residues 269-289 form a helical membrane-spanning segment; that stretch reads VILIFHSVALCLASLNSCLDP. The Cytoplasmic portion of the chain corresponds to 290 to 335; that stretch reads VIYYFTTNEFRRRLSRQDLPDNIQLHTKSYKIASNHATSTVAAELC.

It belongs to the G-protein coupled receptor 1 family. In terms of assembly, interacts with GNA13. Interacts with CCL21. As to expression, expressed in spleen and, at low levels, in brain. Highly expressed in developing and mature regulatory T-cells.

It is found in the cell membrane. In terms of biological role, G-protein-coupled receptor of lysophosphatidylserine (LysoPS) that plays different roles in immune response. Plays a negative role in regulatory T-cell accumulation and homeostasis. Under inflammatory conditions where LysoPS production increases, contributes to the down-regulation of regulatory T-cell activity to favor effector response. Mediates the suppression of IL-2 production in activated T-lymphocytes leading to inhibition of growth, proliferation and differentiation of T-cells. Mechanistically, acts via G(s)-containing heterotrimeric G proteins to trigger elevated cyclic AMP levels and protein kinase A/PKA activity, which may in turn act to antagonize proximal TCR signaling. Plays an important role in the initial period of sepsis through the regulation of macrophage polarization and pro- and anti-inflammatory cytokine secretions. Upon testosterone treatment, acts as a receptor for CCL21 and subsequently triggers through G(q)-alpha and G(12)/G(13) proteins a calcium flux leading to chemotactic effects on activated B-cells. Signals via GNA13 and PKA to promote CD86 up-regulation by follicular B-cells. This is Probable G-protein coupled receptor 174 (Gpr174) from Mus musculus (Mouse).